Consider the following 166-residue polypeptide: NADH-quinone oxidoreductase subunit B (166 aa).

Positions 44, 45, 110, and 140 each coordinate [4Fe-4S] cluster.

It belongs to the complex I 20 kDa subunit family. As to quaternary structure, NDH-1 is composed of 14 different subunits. Subunits NuoB, C, D, E, F, and G constitute the peripheral sector of the complex. The cofactor is [4Fe-4S] cluster.

The protein resides in the cell membrane. It carries out the reaction a quinone + NADH + 5 H(+)(in) = a quinol + NAD(+) + 4 H(+)(out). NDH-1 shuttles electrons from NADH, via FMN and iron-sulfur (Fe-S) centers, to quinones in the respiratory chain. The immediate electron acceptor for the enzyme in this species is believed to be a menaquinone. Couples the redox reaction to proton translocation (for every two electrons transferred, four hydrogen ions are translocated across the cytoplasmic membrane), and thus conserves the redox energy in a proton gradient. The sequence is that of NADH-quinone oxidoreductase subunit B from Carboxydothermus hydrogenoformans (strain ATCC BAA-161 / DSM 6008 / Z-2901).